Here is a 462-residue protein sequence, read N- to C-terminus: Beta-glucosidase 1A (462 aa).

Q20, H123, and N169 together coordinate substrate. The Proton donor role is filled by E170. Y301 is a binding site for substrate. E365 (nucleophile) is an active-site residue. Residues W415 and 422–423 (EW) contribute to the substrate site.

It belongs to the glycosyl hydrolase 1 family.

The enzyme catalyses Hydrolysis of terminal, non-reducing beta-D-glucosyl residues with release of beta-D-glucose.. In terms of biological role, plays an important role in cellulose degradation. Shows hydrolytic activity against several glycosidic compounds. This chain is Beta-glucosidase 1A, found in Phanerodontia chrysosporium (White-rot fungus).